The following is a 221-amino-acid chain: Bcl-2-related ovarian killer protein homolog A (221 aa).

The BH4 signature appears at 32-44 (KVLCRDYIHSRLH). Residues 64–80 (VSSVLLWLGDELEYLRP) carry the BH3 motif. The short motif at 110–140 (EIFSTEYSRKGLEKHKGVTWGKIVSLYAVAG) is the BH1 element. The short motif at 173 to 187 (WLKKRGGWADITKCV) is the BH2 element. Residues 198 to 218 (WLVTAACACGHYLKAVVFYLL) form a helical membrane-spanning segment.

The protein belongs to the Bcl-2 family. In terms of tissue distribution, strongest expression in ovary and eye, weaker expression in gut, kidney and brain. Little expression in liver or heart.

It is found in the membrane. In terms of biological role, may play a role in apoptosis. Does not appear to show pro-apoptotic activity when expressed ectopically in early embryos. This Danio rerio (Zebrafish) protein is Bcl-2-related ovarian killer protein homolog A.